The primary structure comprises 73 residues: Large ribosomal subunit protein bL28 (73 aa).

The protein belongs to the bacterial ribosomal protein bL28 family.

This chain is Large ribosomal subunit protein bL28, found in Fervidobacterium nodosum (strain ATCC 35602 / DSM 5306 / Rt17-B1).